The sequence spans 1357 residues: DNA-directed RNA polymerase subunit beta (1357 aa).

This sequence belongs to the RNA polymerase beta chain family. In terms of assembly, the RNAP catalytic core consists of 2 alpha, 1 beta, 1 beta' and 1 omega subunit. When a sigma factor is associated with the core the holoenzyme is formed, which can initiate transcription.

The catalysed reaction is RNA(n) + a ribonucleoside 5'-triphosphate = RNA(n+1) + diphosphate. DNA-dependent RNA polymerase catalyzes the transcription of DNA into RNA using the four ribonucleoside triphosphates as substrates. This Pseudomonas syringae pv. syringae (strain B728a) protein is DNA-directed RNA polymerase subunit beta.